Here is a 56-residue protein sequence, read N- to C-terminus: MAFDKKLLEIVACPVCKGKLEFDKQAQTLNCKFDKLAFPITEGIPVLLENRAQPLS.

The protein belongs to the UPF0434 family.

This is UPF0434 protein Sden_2197 from Shewanella denitrificans (strain OS217 / ATCC BAA-1090 / DSM 15013).